Here is a 349-residue protein sequence, read N- to C-terminus: 4-hydroxythreonine-4-phosphate dehydrogenase (349 aa).

Residues H141 and T142 each coordinate substrate. H176, H221, and H276 together coordinate a divalent metal cation. The substrate site is built by K284, N293, and R302.

This sequence belongs to the PdxA family. As to quaternary structure, homodimer. Requires Zn(2+) as cofactor. Mg(2+) is required as a cofactor. The cofactor is Co(2+).

Its subcellular location is the cytoplasm. It catalyses the reaction 4-(phosphooxy)-L-threonine + NAD(+) = 3-amino-2-oxopropyl phosphate + CO2 + NADH. It participates in cofactor biosynthesis; pyridoxine 5'-phosphate biosynthesis; pyridoxine 5'-phosphate from D-erythrose 4-phosphate: step 4/5. In terms of biological role, catalyzes the NAD(P)-dependent oxidation of 4-(phosphooxy)-L-threonine (HTP) into 2-amino-3-oxo-4-(phosphooxy)butyric acid which spontaneously decarboxylates to form 3-amino-2-oxopropyl phosphate (AHAP). This chain is 4-hydroxythreonine-4-phosphate dehydrogenase, found in Methylorubrum populi (strain ATCC BAA-705 / NCIMB 13946 / BJ001) (Methylobacterium populi).